A 227-amino-acid chain; its full sequence is Cytochrome c oxidase subunit 2 (227 aa).

Over 1-14 the chain is Mitochondrial intermembrane; it reads MAYPFQLGLQDATS. A helical transmembrane segment spans residues 15–45; that stretch reads PIMEELTNFHDHTLMIVFLISSLVLYLISLM. Residues 46 to 59 are Mitochondrial matrix-facing; sequence LTTKLIHTNTMDAQ. A helical transmembrane segment spans residues 60–87; the sequence is EVETVWTILPAIILIMIALPSLRILYLM. Over 88–227 the chain is Mitochondrial intermembrane; that stretch reads DEINNPVLTV…LFENWSTSMI (140 aa). Residues histidine 161, cysteine 196, glutamate 198, cysteine 200, histidine 204, and methionine 207 each contribute to the Cu cation site. Position 198 (glutamate 198) interacts with Mg(2+).

This sequence belongs to the cytochrome c oxidase subunit 2 family. As to quaternary structure, component of the cytochrome c oxidase (complex IV, CIV), a multisubunit enzyme composed of 14 subunits. The complex is composed of a catalytic core of 3 subunits MT-CO1, MT-CO2 and MT-CO3, encoded in the mitochondrial DNA, and 11 supernumerary subunits COX4I, COX5A, COX5B, COX6A, COX6B, COX6C, COX7A, COX7B, COX7C, COX8 and NDUFA4, which are encoded in the nuclear genome. The complex exists as a monomer or a dimer and forms supercomplexes (SCs) in the inner mitochondrial membrane with NADH-ubiquinone oxidoreductase (complex I, CI) and ubiquinol-cytochrome c oxidoreductase (cytochrome b-c1 complex, complex III, CIII), resulting in different assemblies (supercomplex SCI(1)III(2)IV(1) and megacomplex MCI(2)III(2)IV(2)). Found in a complex with TMEM177, COA6, COX18, COX20, SCO1 and SCO2. Interacts with TMEM177 in a COX20-dependent manner. Interacts with COX20. Interacts with COX16. Requires Cu cation as cofactor.

It localises to the mitochondrion inner membrane. It catalyses the reaction 4 Fe(II)-[cytochrome c] + O2 + 8 H(+)(in) = 4 Fe(III)-[cytochrome c] + 2 H2O + 4 H(+)(out). Functionally, component of the cytochrome c oxidase, the last enzyme in the mitochondrial electron transport chain which drives oxidative phosphorylation. The respiratory chain contains 3 multisubunit complexes succinate dehydrogenase (complex II, CII), ubiquinol-cytochrome c oxidoreductase (cytochrome b-c1 complex, complex III, CIII) and cytochrome c oxidase (complex IV, CIV), that cooperate to transfer electrons derived from NADH and succinate to molecular oxygen, creating an electrochemical gradient over the inner membrane that drives transmembrane transport and the ATP synthase. Cytochrome c oxidase is the component of the respiratory chain that catalyzes the reduction of oxygen to water. Electrons originating from reduced cytochrome c in the intermembrane space (IMS) are transferred via the dinuclear copper A center (CU(A)) of subunit 2 and heme A of subunit 1 to the active site in subunit 1, a binuclear center (BNC) formed by heme A3 and copper B (CU(B)). The BNC reduces molecular oxygen to 2 water molecules using 4 electrons from cytochrome c in the IMS and 4 protons from the mitochondrial matrix. This chain is Cytochrome c oxidase subunit 2 (MT-CO2), found in Gerbillurus vallinus (Brush-tailed hairy-footed gerbil).